The following is a 460-amino-acid chain: MQLAQLAAFAMTLATSEAAYQGFNYGNKFSDESSKFQADFEAEFKAAKNLVGTSGFTSARLYTMIQAYSTSDVIEAIPAAIAQDTSLLLGLWASGGGMDNEITALKTAISQYGEELGKLVVGISVGSEDLYRNSVEGAEADAGVGVNPDELVEYIKEVRSVIAGTALADVSIGHVDTWDSWTNSSNSAVVEAVDWLGFDGYPFFQSSMANSIDNAKTLFEESVAKTKAVAGDKEVWITETGWPVSGDSQGDAVASIANAKTFWDEVGCPLFGNVNTWWYILQDASPTTPNPSFGIVGSTLSTTPLFDLSCKNSTTSSSSAVVSAAASSAAGSKAVGSSQASSGAAAWATSASGSAKPTFTVGRPGVNGTVFGNGTYPLRPSGSASARPSAGAISSGSGSSSSGSGSSGSTGTSATSGQSSSSGSSAAAGSSSPAAFSGASTLSGSLFGAVVAVFMTLAAL.

Positions 1-18 (MQLAQLAAFAMTLATSEA) are cleaved as a signal peptide. The active-site Proton donor is Glu-128. The N-linked (GlcNAc...) asparagine glycan is linked to Asn-183. The Nucleophile role is filled by Glu-239. Residues Asn-312, Asn-367, and Asn-373 are each glycosylated (N-linked (GlcNAc...) asparagine). Positions 379-437 (RPSGSASARPSAGAISSGSGSSSSGSGSSGSTGTSATSGQSSSSGSSAAAGSSSPAAFS) are disordered. The segment covering 380–437 (PSGSASARPSAGAISSGSGSSSSGSGSSGSTGTSATSGQSSSSGSSAAAGSSSPAAFS) has biased composition (low complexity). The GPI-anchor amidated serine moiety is linked to residue Ser-430. The propeptide at 431-460 (SSPAAFSGASTLSGSLFGAVVAVFMTLAAL) is removed in mature form.

It belongs to the glycosyl hydrolase 17 family. The GPI-anchor is attached to the protein in the endoplasmic reticulum and serves to target the protein to the cell surface. There, the glucosamine-inositol phospholipid moiety is cleaved off and the GPI-modified mannoprotein is covalently attached via its lipidless GPI glycan remnant to the 1,6-beta-glucan of the outer cell wall layer.

The protein resides in the cell membrane. It is found in the secreted. The protein localises to the cell wall. It carries out the reaction Hydrolysis of (1-&gt;3)-beta-D-glucosidic linkages in (1-&gt;3)-beta-D-glucans.. Glucanases play a role in cell expansion during growth, in cell-cell fusion during mating, and in spore release during sporulation. This enzyme may be involved in beta-glucan degradation and also function biosynthetically as a transglycosylase. This chain is Probable glucan endo-1,3-beta-glucosidase eglC (eglC), found in Aspergillus niger (strain ATCC MYA-4892 / CBS 513.88 / FGSC A1513).